A 181-amino-acid chain; its full sequence is uncharacterized protein (181 aa).

The protein belongs to the methyltransferase superfamily.

This is an uncharacterized protein from Bacillus subtilis (strain 168).